Consider the following 187-residue polypeptide: Elongation factor P (187 aa).

The protein belongs to the elongation factor P family.

The protein localises to the cytoplasm. Its pathway is protein biosynthesis; polypeptide chain elongation. Functionally, involved in peptide bond synthesis. Stimulates efficient translation and peptide-bond synthesis on native or reconstituted 70S ribosomes in vitro. Probably functions indirectly by altering the affinity of the ribosome for aminoacyl-tRNA, thus increasing their reactivity as acceptors for peptidyl transferase. This Parasynechococcus marenigrum (strain WH8102) protein is Elongation factor P.